The following is a 217-amino-acid chain: Large ribosomal subunit protein uL3 (217 aa).

The tract at residues 127-162 (GFSRGPMSHGSKNHRAPGSTGAGTTPGRIYPGKRMA) is disordered. A compositionally biased stretch (low complexity) spans 142–153 (APGSTGAGTTPG).

This sequence belongs to the universal ribosomal protein uL3 family. As to quaternary structure, part of the 50S ribosomal subunit. Forms a cluster with proteins L14 and L19.

Its function is as follows. One of the primary rRNA binding proteins, it binds directly near the 3'-end of the 23S rRNA, where it nucleates assembly of the 50S subunit. In Prochlorococcus marinus (strain MIT 9301), this protein is Large ribosomal subunit protein uL3.